The following is a 328-amino-acid chain: 7,8-didemethyl-8-hydroxy-5-deazariboflavin synthase (328 aa).

Residues 1–242 (MTYSRNIFIP…PDVSIQVPPN (242 aa)) enclose the Radical SAM core domain. 3 residues coordinate [4Fe-4S] cluster: Cys15, Cys19, and Cys22.

It belongs to the radical SAM superfamily. CofG family. In terms of assembly, consists of two subunits, CofG and CofH. It depends on [4Fe-4S] cluster as a cofactor.

It catalyses the reaction 5-amino-5-(4-hydroxybenzyl)-6-(D-ribitylimino)-5,6-dihydrouracil + S-adenosyl-L-methionine = 7,8-didemethyl-8-hydroxy-5-deazariboflavin + 5'-deoxyadenosine + L-methionine + NH4(+) + H(+). The protein operates within cofactor biosynthesis; coenzyme F0 biosynthesis. In terms of biological role, catalyzes the radical-mediated synthesis of 7,8-didemethyl-8-hydroxy-5-deazariboflavin from 5-amino-5-(4-hydroxybenzyl)-6-(D-ribitylimino)-5,6-dihydrouracil. The sequence is that of 7,8-didemethyl-8-hydroxy-5-deazariboflavin synthase from Methanothermobacter thermautotrophicus (strain ATCC 29096 / DSM 1053 / JCM 10044 / NBRC 100330 / Delta H) (Methanobacterium thermoautotrophicum).